The primary structure comprises 379 residues: Ascochitine biosynthesis cluster protein 8 (379 aa).

The next 3 helical transmembrane spans lie at 87–107 (ELIA…LDLE), 116–136 (VGPV…VAAC), and 141–161 (IKVF…VVAL).

The protein resides in the membrane. Its pathway is mycotoxin biosynthesis. Part of the gene cluster that mediates the biosynthesis of the selective antifungal agent ascochitine, an o-quinone methide that plays a possible protective role against other microbial competitors in nature and is considered to be important for pathogenicity of legume-associated Didymella species. The pathway probably begins with the synthesis of a keto-aldehyde intermediate by the ascochitine non-reducing polyketide synthase pksAC from successive condensations of 4 malonyl-CoA units, presumably with a simple acetyl-CoA starter unit. Release of the keto-aldehyde intermediate is consistent with the presence of the C-terminal reductive release domain. The HR-PKS (orf7) probably makes a diketide starter unit which is passed to the non-reducing polyketide synthase pksAC for further extension, producing ascochital and ascochitine. The aldehyde dehydrogenase (orf1), the 2-oxoglutarate-dependent dioxygenase (orf3) and the dehydrogenase (orf9) are probably involved in subsequent oxidations of methyl groups to the carboxylic acid of the heterocyclic ring. The ascochitine gene cluster also includes a gene encoding a short peptide with a cupin domain (orf2) that is often found in secondary metabolite gene clusters and which function has still to be determined. This Didymella fabae (Leaf and pod spot disease fungus) protein is Ascochitine biosynthesis cluster protein 8.